A 312-amino-acid polypeptide reads, in one-letter code: tRNA pseudouridine synthase B (312 aa).

The active-site Nucleophile is aspartate 49.

Belongs to the pseudouridine synthase TruB family. Type 1 subfamily.

The enzyme catalyses uridine(55) in tRNA = pseudouridine(55) in tRNA. In terms of biological role, responsible for synthesis of pseudouridine from uracil-55 in the psi GC loop of transfer RNAs. This Chelativorans sp. (strain BNC1) protein is tRNA pseudouridine synthase B.